The sequence spans 310 residues: Solute carrier family 25 member 47 (310 aa).

Solcar repeat units follow at residues 1 to 80 (MDFV…CLAH), 93 to 208 (PTKA…LSEW), and 217 to 304 (PDVL…VLRL). 6 consecutive transmembrane segments (helical) span residues 3–23 (FVAGAIGGVCGVAVGYPLDTV), 49–69 (LWGFYRGLSLPVCTVSLVSSV), 98–116 (ITLSGCASGLVRVFLTSPT), 192–212 (GHSFATYFLSYAVLSEWLTPA), 219–239 (VLGVLVAGGCAGVLAWAVATP), and 275–295 (VLFKGLALNCCRAFPVNMVVF).

This sequence belongs to the mitochondrial carrier (TC 2.A.29) family.

It is found in the mitochondrion inner membrane. It localises to the mitochondrion outer membrane. It catalyses the reaction NAD(+)(in) = NAD(+)(out). The catalysed reaction is acetyl-CoA(in) = acetyl-CoA(out). In terms of biological role, mitochondrial NAD(+) transporter that acts as a 'metabolic gate' in hepatic lipogenesis. Provides NAD(+) substrate to mitochondrial SIRT3 deacetylase and enables its NAD(+)-dependent activities in mitochondrial energy metabolism. This triggers downstream activation of PRKAA1/AMPK-alpha signaling cascade that negatively regulates sterol regulatory element-binding protein (SREBP) transcriptional activities and ATP-consuming lipogenesis to restore cellular energy balance. May transport other mitochondrial metabolites having an aromatic nucleotide and phosphate groups, such as acetyl-CoA. Does not transport amino acids. The transport mechanism remains to be elucidated. This Rattus norvegicus (Rat) protein is Solute carrier family 25 member 47.